A 288-amino-acid polypeptide reads, in one-letter code: Phosphopantetheinyl transferase (288 aa).

CoA-binding positions include R60, R99–K104, and N118–H121. D139 and E196 together coordinate Mg(2+). E196–K200 provides a ligand contact to CoA.

Belongs to the P-Pant transferase superfamily. AcpS family. As to quaternary structure, monomer.

Its subcellular location is the cytoplasm. It is found in the cytosol. The catalysed reaction is apo-[ACP] + CoA = holo-[ACP] + adenosine 3',5'-bisphosphate + H(+). It functions in the pathway lipid metabolism; fatty acid biosynthesis. In terms of biological role, phosphopantetheinyl transferase that is essential for attaching phosphopantetheine to ACP domains of the polyunsaturated fatty acid (PUFA) synthase converting the inactive apo-synthase to the active holo-synthase. This chain is Phosphopantetheinyl transferase, found in Thraustochytrium sp. (strain ATCC 26185 / S-3).